The chain runs to 137 residues: Large ribosomal subunit protein uL16 (137 aa).

This sequence belongs to the universal ribosomal protein uL16 family. As to quaternary structure, part of the 50S ribosomal subunit.

Functionally, binds 23S rRNA and is also seen to make contacts with the A and possibly P site tRNAs. The protein is Large ribosomal subunit protein uL16 of Xylella fastidiosa (strain M23).